The following is a 1374-amino-acid chain: L-2-aminoadipate reductase large subunit (1374 aa).

In terms of domain architecture, Carrier spans 828-905 (SEFNQQEREI…AFAAEVSRLK (78 aa)). O-(pantetheine 4'-phosphoryl)serine is present on Ser-865.

This sequence belongs to the ATP-dependent AMP-binding enzyme family. As to quaternary structure, heterodimer of an alpha and a beta subunit. Requires pantetheine 4'-phosphate as cofactor.

It catalyses the reaction (S)-2-amino-6-oxohexanoate + NADP(+) + H2O = L-2-aminoadipate + NADPH + 2 H(+). It carries out the reaction (S)-2-amino-6-oxohexanoate + NAD(+) + H2O = L-2-aminoadipate + NADH + 2 H(+). The enzyme catalyses (S)-2-amino-6-oxohexanoate + AMP + diphosphate + NADP(+) = L-2-aminoadipate + ATP + NADPH + H(+). Its pathway is amino-acid biosynthesis; L-lysine biosynthesis via AAA pathway; L-lysine from L-alpha-aminoadipate (fungal route): step 1/3. Catalyzes the activation of alpha-aminoadipate by ATP-dependent adenylation and the reduction of activated alpha-aminoadipate by NADPH. The activated alpha-aminoadipate is bound to the phosphopantheinyl group of the enzyme itself before it is reduced to (S)-2-amino-6-oxohexanoate. The polypeptide is L-2-aminoadipate reductase large subunit (LYS2) (Candida glabrata (strain ATCC 2001 / BCRC 20586 / JCM 3761 / NBRC 0622 / NRRL Y-65 / CBS 138) (Yeast)).